The chain runs to 252 residues: tRNA pseudouridine synthase A (252 aa).

D51 serves as the catalytic Nucleophile. Y105 is a binding site for substrate.

It belongs to the tRNA pseudouridine synthase TruA family.

The catalysed reaction is uridine(38/39/40) in tRNA = pseudouridine(38/39/40) in tRNA. Its function is as follows. Formation of pseudouridine at positions 38, 39 and 40 in the anticodon stem and loop of transfer RNAs. This is tRNA pseudouridine synthase A from Thermoplasma acidophilum (strain ATCC 25905 / DSM 1728 / JCM 9062 / NBRC 15155 / AMRC-C165).